The following is a 552-amino-acid chain: Carboxypeptidase Y homolog A (552 aa).

The first 18 residues, 1–18 (MRIATSTLLVGAASAAFA), serve as a signal peptide directing secretion. Residues 19-133 (PQDGTQRVLN…KLDNYNLRAR (115 aa)) constitute a propeptide that is removed on maturation. Disulfide bonds link C187–C427, C321–C335, C345–C368, C352–C361, and C390–C397. N218 carries an N-linked (GlcNAc...) asparagine glycan. Residue S274 is part of the active site. D466 is an active-site residue. N516 is a glycosylation site (N-linked (GlcNAc...) asparagine). The active site involves H527.

Belongs to the peptidase S10 family.

It localises to the vacuole. It carries out the reaction Release of a C-terminal amino acid with broad specificity.. In terms of biological role, vacuolar carboxypeptidase involved in degradation of small peptides. Digests preferentially peptides containing an aliphatic or hydrophobic residue in P1' position, as well as methionine, leucine or phenylalanine in P1 position of ester substrate. This Pyricularia oryzae (strain 70-15 / ATCC MYA-4617 / FGSC 8958) (Rice blast fungus) protein is Carboxypeptidase Y homolog A (CPYA).